Here is a 251-residue protein sequence, read N- to C-terminus: Adenylate kinase (251 aa).

46–51 (GAGKGT) lines the ATP pocket. The tract at residues 66–95 (ATGDMLRSQVQQQTPLGVEAKKIMDAGGLV) is NMP. Residues T67, R72, 93-95 (GLV), 122-125 (GFPR), and Q129 each bind AMP. Residues 163-200 (GRLVHPASGRSYHKVFNPPKKEMIDDITGEALVQRSDD) are LID. Residues R164 and 173-174 (SY) each bind ATP. R197 and R208 together coordinate AMP. Q236 provides a ligand contact to ATP.

Belongs to the adenylate kinase family. AK2 subfamily. As to quaternary structure, monomer.

The protein resides in the cytoplasm. Its subcellular location is the cytosol. The protein localises to the mitochondrion intermembrane space. It catalyses the reaction AMP + ATP = 2 ADP. Catalyzes the reversible transfer of the terminal phosphate group between ATP and AMP. Plays an important role in cellular energy homeostasis and in adenine nucleotide metabolism. Adenylate kinase activity is critical for regulation of the phosphate utilization and the AMP de novo biosynthesis pathways. This Yarrowia lipolytica (strain CLIB 122 / E 150) (Yeast) protein is Adenylate kinase.